A 119-amino-acid polypeptide reads, in one-letter code: Large ribosomal subunit protein bL12 (119 aa).

Belongs to the bacterial ribosomal protein bL12 family. In terms of assembly, homodimer. Part of the ribosomal stalk of the 50S ribosomal subunit. Forms a multimeric L10(L12)X complex, where L10 forms an elongated spine to which 2 to 4 L12 dimers bind in a sequential fashion. Binds GTP-bound translation factors.

Functionally, forms part of the ribosomal stalk which helps the ribosome interact with GTP-bound translation factors. Is thus essential for accurate translation. The polypeptide is Large ribosomal subunit protein bL12 (Lysinibacillus sphaericus (strain C3-41)).